Reading from the N-terminus, the 56-residue chain is Large ribosomal subunit protein bL32 (56 aa).

The segment at 1 to 26 (MAVQQNKKSRSKRGMRRSHDALSTAQ) is disordered. Residues 7 to 16 (KKSRSKRGMR) show a composition bias toward basic residues.

Belongs to the bacterial ribosomal protein bL32 family.

The chain is Large ribosomal subunit protein bL32 from Shewanella baltica (strain OS155 / ATCC BAA-1091).